Reading from the N-terminus, the 55-residue chain is Large ribosomal subunit protein bL33 (55 aa).

Belongs to the bacterial ribosomal protein bL33 family.

The sequence is that of Large ribosomal subunit protein bL33 from Proteus mirabilis (strain HI4320).